Here is a 452-residue protein sequence, read N- to C-terminus: NADH-ubiquinone oxidoreductase chain 4 (452 aa).

Transmembrane regions (helical) follow at residues 7 to 27 (VLMS…IIAL), 57 to 77 (MMSF…ILAS), 95 to 115 (VILL…MFYI), 116 to 136 (WFEA…YQPE), 145 to 165 (MIYT…IFIV), 186 to 206 (MALA…MFTV), 218 to 238 (PIAG…YGIL), 251 to 271 (TSSL…LICL), 278 to 298 (SLIA…ALMS), 303 to 323 (FQAA…LFVM), 336 to 356 (LFLM…WFLF), 360 to 380 (NMAA…TSIL), 386 to 406 (AFIL…YMYT), and 428 to 448 (LTLM…PELI).

It belongs to the complex I subunit 4 family.

The protein localises to the mitochondrion membrane. It catalyses the reaction a ubiquinone + NADH + 5 H(+)(in) = a ubiquinol + NAD(+) + 4 H(+)(out). Its function is as follows. Core subunit of the mitochondrial membrane respiratory chain NADH dehydrogenase (Complex I) that is believed to belong to the minimal assembly required for catalysis. Complex I functions in the transfer of electrons from NADH to the respiratory chain. The immediate electron acceptor for the enzyme is believed to be ubiquinone. The sequence is that of NADH-ubiquinone oxidoreductase chain 4 (ND4) from Lumbricus terrestris (Common earthworm).